We begin with the raw amino-acid sequence, 363 residues long: 3-isopropylmalate dehydrogenase (363 aa).

78 to 91 (GPKWENLPPESQPE) serves as a coordination point for NAD(+). Substrate-binding residues include Arg-99, Arg-109, Arg-138, and Asp-227. Residues Asp-227, Asp-251, and Asp-255 each coordinate Mg(2+). 285–297 (GSAPDIAGKNIAN) contributes to the NAD(+) binding site.

Belongs to the isocitrate and isopropylmalate dehydrogenases family. LeuB type 1 subfamily. In terms of assembly, homodimer. Mg(2+) is required as a cofactor. Requires Mn(2+) as cofactor.

The protein localises to the cytoplasm. The enzyme catalyses (2R,3S)-3-isopropylmalate + NAD(+) = 4-methyl-2-oxopentanoate + CO2 + NADH. Its pathway is amino-acid biosynthesis; L-leucine biosynthesis; L-leucine from 3-methyl-2-oxobutanoate: step 3/4. Catalyzes the oxidation of 3-carboxy-2-hydroxy-4-methylpentanoate (3-isopropylmalate) to 3-carboxy-4-methyl-2-oxopentanoate. The product decarboxylates to 4-methyl-2 oxopentanoate. The chain is 3-isopropylmalate dehydrogenase from Salmonella paratyphi A (strain ATCC 9150 / SARB42).